Here is a 1764-residue protein sequence, read N- to C-terminus: Cilia- and flagella-associated protein 44 (1764 aa).

7 WD repeats span residues 115–157 (GTER…IVLR), 160–199 (AFSQDVYGVAFSPYFEGQLTTSGQGHIRFWRMASTFTGLK), 208–248 (GNVE…VVLT), 255–294 (CHDGPIEALLLDRPAGRVLSAGADGRVRMWDFGAVNDAEP), 361–400 (HPAGAVAGLQLSARTHTALVASADGCLRALDYVSGAVLAE), 454–493 (AHKGAVAALAVSADGGRLVSAGEDGSVFFFDLTAQPQPGT), and 495–534 (VPGMPACGLLAPRAFIKLPSGSGTVTCGVWEAAEGGGVLL). The segment at 570-654 (QLVVPKPKRP…GGPSSTTGEL (85 aa)) is disordered. The span at 575 to 584 (KPKRPKKKKG) shows a compositional bias: basic residues. Basic and acidic residues-rich tracts occupy residues 585 to 596 (KNDGEEGDKEGG) and 604 to 628 (GEDKGGEQADGEGGSKEGGEEGRAA). Acidic residues predominate over residues 629–641 (EEEEEEEADDEAD). WD repeat units follow at residues 649 to 692 (STTG…PLAA), 707 to 752 (AHAG…LHDM), and 753 to 791 (QSGRVSGLGLSHDGAYLVTAAADGALHLLALALPPELAP). Residues 821–850 (YTLEEEKQQAERDQQVREAEEKKLSVRQRL) are a coiled coil. Disordered stretches follow at residues 972–1003 (AAAGGEGGAGGRDTDARGKGSDTGGGPGGDAA) and 1426–1468 (KKKA…CPPG). Positions 1434-1462 (GEDDYDSEEDEEDEDMGDDEVDDDDDGGE) are enriched in acidic residues. 3 coiled-coil regions span residues 1479-1517 (DLREKRLDEEDMIAEFTKTIEVLRKEKEALAKKQRLVEQ), 1567-1674 (LVFS…DAKI), and 1729-1758 (EERDALVALVNAQAAELDRLKGQLLALRRK).

The protein belongs to the CFAP44 family.

The protein localises to the cell projection. Its subcellular location is the cilium. It localises to the flagellum. The protein resides in the cytoplasm. It is found in the cytoskeleton. The protein localises to the flagellum axoneme. Flagellar protein involved in sperm flagellum axoneme organization and function. This Chlamydomonas reinhardtii (Chlamydomonas smithii) protein is Cilia- and flagella-associated protein 44.